A 408-amino-acid chain; its full sequence is Tyrosine--tRNA ligase (408 aa).

Position 35 (Tyr-35) interacts with L-tyrosine. The 'HIGH' region signature appears at 40 to 49; the sequence is PTADSLHVGH. L-tyrosine contacts are provided by Tyr-168 and Gln-172. The 'KMSKS' region signature appears at 228–232; the sequence is KMGKT. Lys-231 serves as a coordination point for ATP. An S4 RNA-binding domain is found at 342 to 407; sequence INIIDLLLKT…GKKTYHRVKL (66 aa).

It belongs to the class-I aminoacyl-tRNA synthetase family. TyrS type 1 subfamily. In terms of assembly, homodimer.

It is found in the cytoplasm. The catalysed reaction is tRNA(Tyr) + L-tyrosine + ATP = L-tyrosyl-tRNA(Tyr) + AMP + diphosphate + H(+). Functionally, catalyzes the attachment of tyrosine to tRNA(Tyr) in a two-step reaction: tyrosine is first activated by ATP to form Tyr-AMP and then transferred to the acceptor end of tRNA(Tyr). The sequence is that of Tyrosine--tRNA ligase from Acetivibrio thermocellus (strain ATCC 27405 / DSM 1237 / JCM 9322 / NBRC 103400 / NCIMB 10682 / NRRL B-4536 / VPI 7372) (Clostridium thermocellum).